We begin with the raw amino-acid sequence, 317 residues long: Pseudouridine-5'-phosphate glycosidase (317 aa).

Glu-27 functions as the Proton donor in the catalytic mechanism. 2 residues coordinate substrate: Lys-89 and Val-109. Asp-141 lines the Mn(2+) pocket. Position 143–145 (143–145) interacts with substrate; that stretch reads SAD. Residue Lys-162 is the Nucleophile of the active site.

Belongs to the pseudouridine-5'-phosphate glycosidase family. Homotrimer. The cofactor is Mn(2+).

It carries out the reaction D-ribose 5-phosphate + uracil = psi-UMP + H2O. Catalyzes the reversible cleavage of pseudouridine 5'-phosphate (PsiMP) to ribose 5-phosphate and uracil. Functions biologically in the cleavage direction, as part of a pseudouridine degradation pathway. In Sorangium cellulosum (strain So ce56) (Polyangium cellulosum (strain So ce56)), this protein is Pseudouridine-5'-phosphate glycosidase.